A 166-amino-acid chain; its full sequence is Phosphopantetheine adenylyltransferase (166 aa).

Serine 10 serves as a coordination point for substrate. Residues 10–11 and histidine 18 each bind ATP; that span reads SF. Residues lysine 42, alanine 79, and arginine 93 each contribute to the substrate site. Residues 94–96, glutamate 104, and 129–135 each bind ATP; these read GLR and VRPITAT.

The protein belongs to the bacterial CoaD family. In terms of assembly, homohexamer. The cofactor is Mg(2+).

The protein resides in the cytoplasm. The enzyme catalyses (R)-4'-phosphopantetheine + ATP + H(+) = 3'-dephospho-CoA + diphosphate. It functions in the pathway cofactor biosynthesis; coenzyme A biosynthesis; CoA from (R)-pantothenate: step 4/5. Functionally, reversibly transfers an adenylyl group from ATP to 4'-phosphopantetheine, yielding dephospho-CoA (dPCoA) and pyrophosphate. This Methylobacterium sp. (strain 4-46) protein is Phosphopantetheine adenylyltransferase.